Here is a 295-residue protein sequence, read N- to C-terminus: MSVKHFIQITKPGIIFGNVLSVAGGFFLASKGHVDFALFLAVVIGTSLVVASGCVFNNCIDRDIDHKMERTKNRVMVQGGMSLPLALIYATLLGVAGFSLLYVQANPLSAFCALIGFIVYVGFYSLWLKRKSVHGTLVGSLSGAMPPVIGYCAVSNSFDLAAVTLLVMFSLWQMPHSFAIAIFRFKDYSAANIPVLPVARGVLAAKKQIVLYVLAFVLATLMLTLGGYAGLGYLAVAAAMGLYWLYMAWGGYKAEDDSKWARKVFGFSILTVTALSVMMGVDSQTAADVLMTYAR.

A run of 9 helical transmembrane segments spans residues 9 to 29 (ITKP…FFLA), 36 to 56 (FALF…GCVF), 83 to 103 (LPLA…LLYV), 108 to 128 (LSAF…SLWL), 135 to 155 (GTLV…CAVS), 163 to 183 (VTLL…IAIF), 209 to 229 (IVLY…GGYA), 230 to 250 (GLGY…MAWG), and 264 to 284 (VFGF…VDSQ).

This sequence belongs to the UbiA prenyltransferase family. Protoheme IX farnesyltransferase subfamily.

The protein localises to the cell inner membrane. The enzyme catalyses heme b + (2E,6E)-farnesyl diphosphate + H2O = Fe(II)-heme o + diphosphate. It participates in porphyrin-containing compound metabolism; heme O biosynthesis; heme O from protoheme: step 1/1. Converts heme B (protoheme IX) to heme O by substitution of the vinyl group on carbon 2 of heme B porphyrin ring with a hydroxyethyl farnesyl side group. This is Protoheme IX farnesyltransferase 2 from Pseudomonas putida (strain GB-1).